The primary structure comprises 720 residues: Inactive serine protease PAMR1 (720 aa).

Positions 1–21 (MELGCWTQLGLTFLQLLLISS) are cleaved as a signal peptide. 9 disulfide bridges follow: C128-C150, C177-C199, C239-C250, C244-C260, C262-C271, C280-C329, C315-C342, C414-C442, and C489-C505. One can recognise a CUB domain in the interval 128–236 (CGQVLRAPKG…DGFHAIYEEI (109 aa)). The EGF-like domain occupies 235-272 (EITACSSSPCFHDGTCVLDKAGSYKCACLAGYTGQRCE). Sushi domains are found at residues 278–344 (RNCS…ICIK) and 387–444 (APTK…SCIP). Residues 445-720 (ICGKIENITA…FKDWIERNMK (276 aa)) enclose the Peptidase S1 domain. An N-linked (GlcNAc...) asparagine glycan is attached at N614. Cystine bridges form between C630-C649 and C661-C697.

It belongs to the peptidase S1 family.

The protein resides in the secreted. Its function is as follows. May play a role in regeneration of skeletal muscle. The polypeptide is Inactive serine protease PAMR1 (PAMR1) (Homo sapiens (Human)).